A 96-amino-acid polypeptide reads, in one-letter code: C-C motif chemokine 20 (96 aa).

The N-terminal stretch at 1–26 is a signal peptide; it reads MCCTKSLLLAALMSVLLLHLCGESEA. 2 disulfide bridges follow: Cys32–Cys58 and Cys33–Cys74.

Belongs to the intercrine beta (chemokine CC) family. Post-translationally, C-terminal processed forms which lack 1, 3 or 6 amino acids are produced by proteolytic cleavage after secretion from peripheral blood monocytes. Expressed in the seminal plasma, endometrial fluid and follicular fluid (at protein level). Expressed predominantly in the liver, lymph nodes, appendix, peripheral blood lymphocytes, and fetal lung. Low levels seen in thymus, prostate, testis, small intestine and colon.

It is found in the secreted. In terms of biological role, acts as a ligand for C-C chemokine receptor CCR6. Signals through binding and activation of CCR6 and induces a strong chemotactic response and mobilization of intracellular calcium ions. The ligand-receptor pair CCL20-CCR6 is responsible for the chemotaxis of dendritic cells (DC), effector/memory T-cells and B-cells and plays an important role at skin and mucosal surfaces under homeostatic and inflammatory conditions, as well as in pathology, including cancer and various autoimmune diseases. CCL20 acts as a chemotactic factor that attracts lymphocytes and, slightly, neutrophils, but not monocytes. Involved in the recruitment of both the pro-inflammatory IL17 producing helper T-cells (Th17) and the regulatory T-cells (Treg) to sites of inflammation. Required for optimal migration of thymic natural regulatory T cells (nTregs) and DN1 early thymocyte progenitor cells. C-terminal processed forms have been shown to be equally chemotactically active for leukocytes. Positively regulates sperm motility and chemotaxis via its binding to CCR6 which triggers Ca2+ mobilization in the sperm which is important for its motility. Inhibits proliferation of myeloid progenitors in colony formation assays. May be involved in formation and function of the mucosal lymphoid tissues by attracting lymphocytes and dendritic cells towards epithelial cells. Possesses antibacterial activity towards E.coli ATCC 25922 and S.aureus ATCC 29213. The polypeptide is C-C motif chemokine 20 (CCL20) (Homo sapiens (Human)).